The primary structure comprises 127 residues: Large ribosomal subunit protein bL12 (127 aa).

It belongs to the bacterial ribosomal protein bL12 family. As to quaternary structure, homodimer. Part of the ribosomal stalk of the 50S ribosomal subunit. Forms a multimeric L10(L12)X complex, where L10 forms an elongated spine to which 2 to 4 L12 dimers bind in a sequential fashion. Binds GTP-bound translation factors.

Its function is as follows. Forms part of the ribosomal stalk which helps the ribosome interact with GTP-bound translation factors. Is thus essential for accurate translation. In Carboxydothermus hydrogenoformans (strain ATCC BAA-161 / DSM 6008 / Z-2901), this protein is Large ribosomal subunit protein bL12.